A 723-amino-acid polypeptide reads, in one-letter code: ATP-dependent DNA helicase RRM3 (723 aa).

Disordered stretches follow at residues 1 to 31 (MFRS…SGSH) and 61 to 101 (DLES…DDDP). Ser64 carries the phosphoserine modification. Low complexity predominate over residues 83 to 96 (NNSSSLFSQSQGSF). 254-261 (GSAGTGKS) serves as a coordination point for ATP. Residues 682 to 701 (QVYVALSRAVTMDTLQVLNF) mediate DNA binding.

This sequence belongs to the helicase family. As to quaternary structure, interacts with DEF1 and POL30.

It is found in the nucleus. The protein localises to the chromosome. Its subcellular location is the telomere. The enzyme catalyses Couples ATP hydrolysis with the unwinding of duplex DNA at the replication fork by translocating in the 5'-3' direction. This creates two antiparallel DNA single strands (ssDNA). The leading ssDNA polymer is the template for DNA polymerase III holoenzyme which synthesizes a continuous strand.. The catalysed reaction is ATP + H2O = ADP + phosphate + H(+). 5' to 3' DNA replicative helicase recruited to paused replisomes to promote fork progression throughout nonhistone protein-DNA complexes, naturally occurring impediments that are encountered in each S phase where replication forks pauses. Needed for normal fork progression through over 1000 discrete sites scattered throughout the genome, like rDNA, tRNA genes, centromeres, active replication origins, or transcriptional silencers. Required for timely replication of the telomere and subtelomeric DNA and for wild-type levels of telomeric silencing. Involved in regulation of Ty1 transposition and protects the genome from instability at nascent sites of retrotransposition. Involved in DNA repair during stalled replication fork, regulation of fragile sites expression and essential for genome stability. Also plays a role in mtDNA replication. Has G-quadruplex (G4) unwinding activity and can suppress G4-induced genome instability when PIF1 levels are low. The polypeptide is ATP-dependent DNA helicase RRM3 (Saccharomyces cerevisiae (strain ATCC 204508 / S288c) (Baker's yeast)).